The following is a 291-amino-acid chain: Protease HtpX homolog (291 aa).

The next 2 membrane-spanning stretches (helical) occupy residues 11-31 (INTF…GLLA) and 34-54 (FLGM…ACVQ). Zn(2+) is bound at residue histidine 140. Glutamate 141 is a catalytic residue. Histidine 144 lines the Zn(2+) pocket. Transmembrane regions (helical) follow at residues 155–175 (IVFG…RALI) and 186–206 (AFSF…AMLV). Glutamate 215 provides a ligand contact to Zn(2+).

This sequence belongs to the peptidase M48B family. Zn(2+) is required as a cofactor.

Its subcellular location is the cell membrane. This is Protease HtpX homolog from Tropheryma whipplei (strain TW08/27) (Whipple's bacillus).